The following is a 729-amino-acid chain: Rho GTPase-activating protein 28 (729 aa).

2 disordered regions span residues 20-42 (AQPP…LSRK) and 55-105 (SNES…AEVT). Over residues 65 to 75 (SRSNSEASVDS) the composition is skewed to polar residues. At Ser-72 the chain carries Phosphoserine. Basic and acidic residues predominate over residues 80 to 89 (DFWREIESIK). The residue at position 159 (Thr-159) is a Phosphothreonine. The tract at residues 176–236 (GVSESPPRDT…SQDKEGSFAV (61 aa)) is disordered. The span at 195 to 204 (GTKEERELPR) shows a compositional bias: basic and acidic residues. Positions 217–226 (SLNSTTLSDA) are enriched in polar residues. Positions 380-577 (VPLTVLLDGD…LMLKYQKILW (198 aa)) constitute a Rho-GAP domain. Residues 612-631 (TLERETASPKTSKVLQKSPS) form a disordered region. Over residues 619–630 (SPKTSKVLQKSP) the composition is skewed to polar residues.

As to expression, expressed in testis. Expressed at moderate level in kidney and ovary, and weakly expressed in spleen and skeletal muscle.

Its function is as follows. GTPase activator for the Rho-type GTPases by converting them to an inactive GDP-bound state. The sequence is that of Rho GTPase-activating protein 28 (ARHGAP28) from Homo sapiens (Human).